Consider the following 200-residue polypeptide: Riboflavin kinase (200 aa).

A disordered region spans residues 1-20 (MATARPSIVGPDSGPESPFP). Mg(2+) contacts are provided by threonine 42 and asparagine 44. Glutamate 110 (nucleophile) is an active-site residue.

The protein belongs to the flavokinase family. The cofactor is Zn(2+). Requires Mg(2+) as cofactor.

It carries out the reaction riboflavin + ATP = FMN + ADP + H(+). It participates in cofactor biosynthesis; FMN biosynthesis; FMN from riboflavin (ATP route): step 1/1. Catalyzes the phosphorylation of riboflavin (vitamin B2) to form flavin mononucleotide (FMN) coenzyme. This is Riboflavin kinase (FMN1) from Pyricularia oryzae (strain 70-15 / ATCC MYA-4617 / FGSC 8958) (Rice blast fungus).